Here is a 231-residue protein sequence, read N- to C-terminus: ATP phosphoribosyltransferase (231 aa).

The protein belongs to the ATP phosphoribosyltransferase family. Short subfamily. Heteromultimer composed of HisG and HisZ subunits.

Its subcellular location is the cytoplasm. The enzyme catalyses 1-(5-phospho-beta-D-ribosyl)-ATP + diphosphate = 5-phospho-alpha-D-ribose 1-diphosphate + ATP. Its pathway is amino-acid biosynthesis; L-histidine biosynthesis; L-histidine from 5-phospho-alpha-D-ribose 1-diphosphate: step 1/9. Its function is as follows. Catalyzes the condensation of ATP and 5-phosphoribose 1-diphosphate to form N'-(5'-phosphoribosyl)-ATP (PR-ATP). Has a crucial role in the pathway because the rate of histidine biosynthesis seems to be controlled primarily by regulation of HisG enzymatic activity. This Brucella ovis (strain ATCC 25840 / 63/290 / NCTC 10512) protein is ATP phosphoribosyltransferase.